A 467-amino-acid polypeptide reads, in one-letter code: DEAD-box ATP-dependent RNA helicase CshA (467 aa).

Residues 2 to 30 (TTFQELGLSQEVMKAIERMGFEETTPIQA) carry the Q motif motif. The region spanning 33–203 (IPLSLQNKDV…ERFMNEPELV (171 aa)) is the Helicase ATP-binding domain. Residue 46–53 (AQTGTGKT) coordinates ATP. A DEAD box motif is present at residues 151–154 (DEAD). Positions 214-374 (NIQQYYLEVH…RMKPPTLDEA (161 aa)) constitute a Helicase C-terminal domain. Residues 428–467 (TTPVQLTEEPPLAVKREKKRGGRPDGSARSRTKKRRITAH) are disordered. Residues 457 to 467 (SRTKKRRITAH) are compositionally biased toward basic residues.

It belongs to the DEAD box helicase family. CshA subfamily. In terms of assembly, oligomerizes, may be a member of the RNA degradosome.

It localises to the cytoplasm. It catalyses the reaction ATP + H2O = ADP + phosphate + H(+). Functionally, DEAD-box RNA helicase possibly involved in RNA degradation. Unwinds dsRNA in both 5'- and 3'-directions, has RNA-dependent ATPase activity. This is DEAD-box ATP-dependent RNA helicase CshA from Geobacillus kaustophilus (strain HTA426).